The following is a 226-amino-acid chain: Putative ankyrin repeat protein RF_0939 (226 aa).

ANK repeat units lie at residues 56 to 86, 91 to 120, 125 to 154, and 157 to 194; these read VSTT…NVNM, FKDT…AVNG, LLGP…AVDQ, and SGET…DTNA.

This is Putative ankyrin repeat protein RF_0939 from Rickettsia felis (strain ATCC VR-1525 / URRWXCal2) (Rickettsia azadi).